Consider the following 480-residue polypeptide: Glutarate-semialdehyde dehydrogenase (480 aa).

NADP(+)-binding positions include 156-157 (WN), 180-183 (KPAS), and 233-234 (GS). The active-site Proton acceptor is Glu255. Position 256 (Leu256) interacts with NADP(+). Cys289 functions as the Nucleophile in the catalytic mechanism. Residue Glu384 participates in NADP(+) binding.

It belongs to the aldehyde dehydrogenase family.

It carries out the reaction 5-oxopentanoate + NADP(+) + H2O = glutarate + NADPH + 2 H(+). Its pathway is amino-acid degradation. Catalyzes the conversion of 5-oxopentanoate (glutarate semialdehyde) to glutarate. Involved in L-lysine degradation. The protein is Glutarate-semialdehyde dehydrogenase of Pseudomonas putida (strain ATCC 47054 / DSM 6125 / CFBP 8728 / NCIMB 11950 / KT2440).